A 385-amino-acid chain; its full sequence is MKMLPGVGVFGTGSSARVLVPLLRAEGFTVQALWGKTEEEAKQLAEEMNIAFYTSRTDDVLLHQDVDLVCINMPPPLTRQISVKALGIGKNVVCEKAATSVDAFRMVTASRYYPQLMSLVGNVLRFLPAFVRMKQLIAEHYVGAVMICDARVYSGSLLSPNYGWICDELMGGGGLHTMGTYIVDLLTHLTGQRAEKVHGLLKTFVRQNAAIRGIRHVTSDDFCFFQMLMGGGVCSTVTLNFNMPGAFVHEVMVVGSAGRLVARGADLYGQKNSAPQEELLLRDSLAVGAGLPEQGAQDVPLLYLKGMVYMVQALRQSFQGQGDRRTWDHTPVSMAASFEDGLYMQSVVDAIKRSSRSGEWEAVEVLAEEPDANQNLCEALQRNNL.

The first 25 residues, 1-25, serve as a signal peptide directing secretion; it reads MKMLPGVGVFGTGSSARVLVPLLRA.

It belongs to the Gfo/Idh/MocA family.

It localises to the secreted. It is found in the extracellular space. The protein localises to the extracellular matrix. In terms of biological role, promotes matrix assembly. The protein is Glucose-fructose oxidoreductase domain-containing protein 2 (GFOD2) of Bos taurus (Bovine).